Here is a 330-residue protein sequence, read N- to C-terminus: RNA polymerase sigma factor RpoS (330 aa).

Positions 56-89 are sigma-70 factor domain-1; sequence DATQLYLGEIGYSPLLTAEEEVYFARRALRGDVA. Residues 94–164 are sigma-70 factor domain-2; the sequence is MIESNLRLVV…ERAIMNQTRT (71 aa). Residues 118-121 carry the Interaction with polymerase core subunit RpoC motif; the sequence is DLIE. The tract at residues 174–249 is sigma-70 factor domain-3; it reads ELNVYLRTAR…DEKENGPEDT (76 aa). Residues 262–315 are sigma-70 factor domain-4; the sequence is WLFELNAKQREVLARRFGLLGYEAATLEDVGREIGLTRERVRQIQVEGLRRLRE. Positions 288 to 307 form a DNA-binding region, H-T-H motif; the sequence is LEDVGREIGLTRERVRQIQV.

Belongs to the sigma-70 factor family. RpoS subfamily. In terms of assembly, interacts with the RNA polymerase core enzyme.

The protein resides in the cytoplasm. Its function is as follows. Sigma factors are initiation factors that promote the attachment of RNA polymerase to specific initiation sites and are then released. This sigma factor is the master transcriptional regulator of the stationary phase and the general stress response. The chain is RNA polymerase sigma factor RpoS from Salmonella dublin.